Consider the following 530-residue polypeptide: Glucose-6-phosphate isomerase (530 aa).

E322 functions as the Proton donor in the catalytic mechanism. Active-site residues include H351 and K455.

It belongs to the GPI family.

It localises to the cytoplasm. The enzyme catalyses alpha-D-glucose 6-phosphate = beta-D-fructose 6-phosphate. It functions in the pathway carbohydrate biosynthesis; gluconeogenesis. The protein operates within carbohydrate degradation; glycolysis; D-glyceraldehyde 3-phosphate and glycerone phosphate from D-glucose: step 2/4. Functionally, catalyzes the reversible isomerization of glucose-6-phosphate to fructose-6-phosphate. The protein is Glucose-6-phosphate isomerase of Geotalea daltonii (strain DSM 22248 / JCM 15807 / FRC-32) (Geobacter daltonii).